Consider the following 136-residue polypeptide: Histone H3.3C (136 aa).

The span at 1-10 shows a compositional bias: polar residues; it reads MARTKQTACK. The interval 1-39 is disordered; sequence MARTKQTACKSTGRKAPRKQLATKAAHKSAPAMGGVKKP. The residue at position 3 (R3) is an Asymmetric dimethylarginine; by PRMT6. Residue T4 is modified to Phosphothreonine; by HASPIN. Allysine; alternate is present on K5. N6,N6,N6-trimethyllysine; alternate is present on K5. An N6,N6-dimethyllysine; alternate modification is found at K5. K5 is modified (N6-(2-hydroxyisobutyryl)lysine; alternate). At K5 the chain carries N6-acetyllysine; alternate. An N6-methyllysine; alternate modification is found at K5. At Q6 the chain carries 5-glutamyl dopamine; alternate. Position 6 is a 5-glutamyl serotonin; alternate (Q6). T7 carries the phosphothreonine; by PKC modification. Position 10 is an N6-(2-hydroxyisobutyryl)lysine; alternate (K10). The residue at position 10 (K10) is an N6-lactoyllysine; alternate. K10 is modified (N6-methylated lysine). At S11 the chain carries ADP-ribosylserine; alternate. Residue S11 is modified to Phosphoserine; alternate; by AURKB, AURKC, RPS6KA3, RPS6KA4 and RPS6KA5. Position 12 is a phosphothreonine; by PKC (T12). Residue K15 is modified to N6-(2-hydroxyisobutyryl)lysine; alternate. K15 bears the N6-lactoyllysine; alternate mark. K15 is modified (N6-acetyllysine). K15 carries the N6-glutaryllysine; alternate modification. R18 carries the asymmetric dimethylarginine modification. N6-(2-hydroxyisobutyryl)lysine; alternate is present on residues K19, K24, and K28. K19 is modified (N6-acetyllysine; alternate). K19, K24, and K28 each carry N6-lactoyllysine; alternate. 3 positions are modified to N6-glutaryllysine; alternate: K19, K24, and K28. N6-butyryllysine; alternate is present on residues K19 and K24. At K19 the chain carries N6-methylated lysine; alternate. At K24 the chain carries N6-acetyllysine. K28 is subject to N6-acetyllysine; alternate. Residue K28 is modified to N6-methylated lysine; alternate. Position 29 is an ADP-ribosylserine; alternate (S29). S29 carries the phosphoserine; alternate; by AURKB, AURKC and RPS6KA5 modification. K37 is modified (N6-(2-hydroxyisobutyryl)lysine; alternate). An N6-acetyllysine; alternate modification is found at K37. K37 is modified (N6-methylated lysine; alternate). The residue at position 42 (Y42) is a Phosphotyrosine. K57 carries the post-translational modification N6-(2-hydroxyisobutyryl)lysine; alternate. K57 bears the N6-lactoyllysine; alternate mark. The residue at position 57 (K57) is an N6-glutaryllysine; alternate. K57 is modified (N6-succinyllysine; alternate). A Phosphoserine modification is found at S58. K65 and K80 each carry N6-(2-hydroxyisobutyryl)lysine; alternate. 2 positions are modified to N6-methylated lysine: K65 and K80. K80 bears the N6-lactoyllysine; alternate mark. Residue K80 is modified to N6-glutaryllysine; alternate. An N6-succinyllysine; alternate modification is found at K80. Position 81 is a phosphothreonine (T81). N6-acetyllysine; alternate is present on residues K116 and K123. 2 positions are modified to N6-glutaryllysine; alternate: K116 and K123. N6-(2-hydroxyisobutyryl)lysine; alternate is present on K123. At K123 the chain carries N6-methylated lysine; alternate. The residue at position 123 (K123) is an N6-succinyllysine; alternate.

Belongs to the histone H3 family. The nucleosome is a histone octamer containing two molecules each of H2A, H2B, H3 and H4 assembled in one H3-H4 heterotetramer and two H2A-H2B heterodimers. The octamer wraps approximately 147 bp of DNA. In terms of processing, acetylation is generally linked to gene activation. Acetylation on Lys-19 (H3K18ac) and Lys-24 (H3K24ac) favors methylation at Arg-18 (H3R17me). Acetylation at Lys-123 (H3K122ac) by EP300/p300 plays a central role in chromatin structure: localizes at the surface of the histone octamer and stimulates transcription, possibly by promoting nucleosome instability. Asymmetric dimethylation at Arg-18 (H3R17me2a) is linked to gene activation. Asymmetric dimethylation at Arg-3 (H3R2me2a) by PRMT6 is linked to gene repression and is mutually exclusive with H3 Lys-5 methylation (H3K4me2 and H3K4me3). H3R2me2a is present at the 3' of genes regardless of their transcription state and is enriched on inactive promoters, while it is absent on active promoters. Post-translationally, methylation at Lys-5 (H3K4me) and Lys-80 (H3K79me) are linked to gene activation. Methylation at Lys-5 (H3K4me) facilitates subsequent acetylation of H3 and H4. Methylation at Lys-80 (H3K79me) is associated with DNA double-strand break (DSB) responses and is a specific target for TP53BP1. Methylation at Lys-10 (H3K9me) and Lys-28 (H3K27me) are linked to gene repression. Methylation at Lys-10 (H3K9me) is a specific target for HP1 proteins (CBX1, CBX3 and CBX5) and prevents subsequent phosphorylation at Ser-11 (H3S10ph) and acetylation of H3 and H4. Methylation at Lys-5 (H3K4me) and Lys-80 (H3K79me) require preliminary monoubiquitination of H2B at 'Lys-120'. In terms of processing, phosphorylated at Thr-4 (H3T3ph) by HASPIN during prophase and dephosphorylated during anaphase. Phosphorylation at Ser-11 (H3S10ph) by AURKB is crucial for chromosome condensation and cell-cycle progression during mitosis and meiosis. In addition phosphorylation at Ser-11 (H3S10ph) by RPS6KA4 and RPS6KA5 is important during interphase because it enables the transcription of genes following external stimulation, like mitogens, stress, growth factors or UV irradiation and result in the activation of genes, such as c-fos and c-jun. Phosphorylation at Ser-11 (H3S10ph), which is linked to gene activation, prevents methylation at Lys-10 (H3K9me) but facilitates acetylation of H3 and H4. Phosphorylation at Ser-11 (H3S10ph) by AURKB mediates the dissociation of HP1 proteins (CBX1, CBX3 and CBX5) from heterochromatin. Phosphorylation at Ser-11 (H3S10ph) is also an essential regulatory mechanism for neoplastic cell transformation. Phosphorylated at Ser-29 (H3S28ph) by MAP3K20 isoform 1, RPS6KA5 or AURKB during mitosis or upon ultraviolet B irradiation. Phosphorylation at Thr-7 (H3T6ph) by PRKCB is a specific tag for epigenetic transcriptional activation that prevents demethylation of Lys-5 (H3K4me) by LSD1/KDM1A. At centromeres, specifically phosphorylated at Thr-12 (H3T11ph) from prophase to early anaphase, by DAPK3 and PKN1. Phosphorylation at Thr-12 (H3T11ph) by PKN1 or isoform M2 of PKM (PKM2) is a specific tag for epigenetic transcriptional activation that promotes demethylation of Lys-10 (H3K9me) by KDM4C/JMJD2C. Phosphorylation at Tyr-42 (H3Y41ph) by JAK2 promotes exclusion of CBX5 (HP1 alpha) from chromatin. Lysine deamination at Lys-5 (H3K4all) to form allysine only takes place on H3K4me3 and results in gene repression. Post-translationally, butyrylation of histones marks active promoters and competes with histone acetylation. It is present during late spermatogenesis. In terms of processing, succinylation at Lys-80 (H3K79succ) by KAT2A takes place with a maximum frequency around the transcription start sites of genes. It gives a specific tag for epigenetic transcription activation. Desuccinylation at Lys-123 (H3K122succ) by SIRT7 in response to DNA damage promotes chromatin condensation and double-strand breaks (DSBs) repair. Serine ADP-ribosylation constitutes the primary form of ADP-ribosylation of proteins in response to DNA damage. Serine ADP-ribosylation at Ser-11 (H3S10ADPr) is mutually exclusive with phosphorylation at Ser-11 (H3S10ph) and impairs acetylation at Lys-10 (H3K9ac).

It localises to the nucleus. The protein localises to the chromosome. In terms of biological role, core component of nucleosome. Nucleosomes wrap and compact DNA into chromatin, limiting DNA accessibility to the cellular machineries which require DNA as a template. Histones thereby play a central role in transcription regulation, DNA repair, DNA replication and chromosomal stability. DNA accessibility is regulated via a complex set of post-translational modifications of histones, also called histone code, and nucleosome remodeling. In Cairina moschata (Muscovy duck), this protein is Histone H3.3C.